Consider the following 830-residue polypeptide: MNFGNIVCFNRVFDKNEIRNLISWFLSNYGSIRTKELLDKMKNFGFTYATTTGLSLGLGDLKIPSSKANLVKSSEKILFKTRNRYKNGMINFINVLDEERDIWNVVNENLKKESINNLRQSDFLNPLYSMTLSGARGSITQVKQLIGMRGLMSDSQGNVIPFPIKTNFKEGLNITEYFVSCYGARKGLIDTALKTANAGYLTRRMIYTAQNLIVKRSDCFTKYNTCVLLQNQDKEELKFLKEKLIGRVLAKTIVNAKTGDILVSAGQDICNYTFKKIINFPEVYIRTPFNCVLMEGICQICYGWNLACGKMVELGECVGILAAQSIGEPGTQLTMRTFHTGGVFSAKAKEVITSPLNGKIWYDLNTGLRRVYNKFKEKAFLTLQEKKIVIYENDVSKSIMFLPSSTLLYVKPGRKIFDKQIIGESVNSNLKNDVFGIEEIRDVKAKISGQIFFPQINSKQFGKIFWIISSIIMSFTSLFFHLTKKFSFKNKLICPTTNVHKKELFVNRKKELFPRKFGKLFINIRNVNSLVDKSKVLKKRSSHIITCILDQDKVIMLRNLKKQKRIFGNFKIGCFLKTGQIISNFKLLHSSQIIQERKEFSIFRKVMPFSTNDDTLMRIEDKPFIRKNQLLYRVNFVREKTYDIVQGLPKVEKLLEARMTSSLKEIINNPHDILTESFFTFLDDYENLVAARKSFEVIQKYLIDGVQTVYKSQGVKIADKHIELIVKQITSKVIVTNPGDSSFMVGDFLDLNLVEVLNKRLVNSIVYEPIIMGLTRFSLSSQSFIAQASFQETTRVLTKAALQGRADWLSGLKENLVLGNIIPAGTGFKN.

Zn(2+) is bound by residues Cys219, Cys291, Cys298, and Cys301.

Belongs to the RNA polymerase beta' chain family. RpoC2 subfamily. As to quaternary structure, in plastids the minimal PEP RNA polymerase catalytic core is composed of four subunits: alpha, beta, beta', and beta''. When a (nuclear-encoded) sigma factor is associated with the core the holoenzyme is formed, which can initiate transcription. The cofactor is Zn(2+).

The protein resides in the plastid. Its subcellular location is the chloroplast. It catalyses the reaction RNA(n) + a ribonucleoside 5'-triphosphate = RNA(n+1) + diphosphate. In terms of biological role, DNA-dependent RNA polymerase catalyzes the transcription of DNA into RNA using the four ribonucleoside triphosphates as substrates. This Euglena gracilis protein is DNA-directed RNA polymerase subunit beta'' (rpoC2).